Consider the following 204-residue polypeptide: Protein GrpE (204 aa).

Residues Met-1–Lys-52 form a disordered region. Composition is skewed to basic and acidic residues over residues Pro-7–Glu-22 and Met-38–Lys-52.

Belongs to the GrpE family. In terms of assembly, homodimer.

Its subcellular location is the cytoplasm. Its function is as follows. Participates actively in the response to hyperosmotic and heat shock by preventing the aggregation of stress-denatured proteins, in association with DnaK and GrpE. It is the nucleotide exchange factor for DnaK and may function as a thermosensor. Unfolded proteins bind initially to DnaJ; upon interaction with the DnaJ-bound protein, DnaK hydrolyzes its bound ATP, resulting in the formation of a stable complex. GrpE releases ADP from DnaK; ATP binding to DnaK triggers the release of the substrate protein, thus completing the reaction cycle. Several rounds of ATP-dependent interactions between DnaJ, DnaK and GrpE are required for fully efficient folding. In Coxiella burnetii (strain Dugway 5J108-111), this protein is Protein GrpE.